A 385-amino-acid chain; its full sequence is AA13 family lytic polysaccharide monooxygenase NCU08746 (385 aa).

The signal sequence occupies residues 1-18 (MKFSIISVALASAITVDA). His19 provides a ligand contact to Cu(2+). A Methylhistidine modification is found at His19. One can recognise a Chitin-binding type-4 domain in the interval 19–248 (HGYLTIPFSR…AQVYLSCADI (230 aa)). Cys40 and Cys43 are disulfide-bonded. A glycan (N-linked (GlcNAc...) asparagine) is linked at Asn54. Cystine bridges form between Cys66-Cys245, Cys102-Cys203, Cys118-Cys145, Cys153-Cys161, Cys167-Cys173, and Cys181-Cys192. A Cu(2+)-binding site is contributed by His109. A Cu(2+)-binding site is contributed by Tyr242. Residues 278 to 385 (CTPAATVAVT…ESVAVESSWK (108 aa)) enclose the CBM20 domain. Asn365 carries an N-linked (GlcNAc...) asparagine glycan.

The protein belongs to the polysaccharide monooxygenase AA13 family. Cu(2+) serves as cofactor.

It localises to the secreted. The enzyme catalyses starch + reduced acceptor + O2 = D-glucono-1,5-lactone-terminated malto-oligosaccharides + short-chain malto-oligosaccharides + acceptor + H2O.. Its function is as follows. Starch-active lytic polysaccharide monooxygenase that oxidizes the C1 position of starch substrates, but not in cellulose or chitin. Catalysis by LPMOs requires the reduction of the active-site copper from Cu(II) to Cu(I) by a reducing agent and H(2)O(2) or O(2) as a cosubstrate. This Neurospora crassa (strain ATCC 24698 / 74-OR23-1A / CBS 708.71 / DSM 1257 / FGSC 987) protein is AA13 family lytic polysaccharide monooxygenase NCU08746.